The chain runs to 330 residues: ADP-L-glycero-D-manno-heptose-6-epimerase (330 aa).

NADP(+) is bound by residues 11 to 12, 32 to 33, Lys39, Lys54, 75 to 79, and Asn92; these read FI, DN, and EGACS. Tyr139 functions as the Proton acceptor in the catalytic mechanism. Lys143 is an NADP(+) binding site. Asn168 lines the substrate pocket. Residues Val169 and Lys177 each contribute to the NADP(+) site. Lys177 (proton acceptor) is an active-site residue. Residues Arg179, His186, 200–203, Arg213, and Tyr292 each bind substrate; that span reads FGEY.

Belongs to the NAD(P)-dependent epimerase/dehydratase family. HldD subfamily. As to quaternary structure, homopentamer. NADP(+) serves as cofactor.

It carries out the reaction ADP-D-glycero-beta-D-manno-heptose = ADP-L-glycero-beta-D-manno-heptose. It functions in the pathway nucleotide-sugar biosynthesis; ADP-L-glycero-beta-D-manno-heptose biosynthesis; ADP-L-glycero-beta-D-manno-heptose from D-glycero-beta-D-manno-heptose 7-phosphate: step 4/4. In terms of biological role, catalyzes the interconversion between ADP-D-glycero-beta-D-manno-heptose and ADP-L-glycero-beta-D-manno-heptose via an epimerization at carbon 6 of the heptose. The protein is ADP-L-glycero-D-manno-heptose-6-epimerase of Paraburkholderia phymatum (strain DSM 17167 / CIP 108236 / LMG 21445 / STM815) (Burkholderia phymatum).